A 488-amino-acid chain; its full sequence is 3-octaprenyl-4-hydroxybenzoate carboxy-lyase (488 aa).

A Mn(2+)-binding site is contributed by N172. Residues 175-177 (IYR), 189-191 (RWL), and 194-195 (RG) contribute to the prenylated FMN site. E238 lines the Mn(2+) pocket. D287 acts as the Proton donor in catalysis.

It belongs to the UbiD family. In terms of assembly, homohexamer. Prenylated FMN is required as a cofactor. It depends on Mn(2+) as a cofactor.

It localises to the cell membrane. It carries out the reaction a 4-hydroxy-3-(all-trans-polyprenyl)benzoate + H(+) = a 2-(all-trans-polyprenyl)phenol + CO2. It participates in cofactor biosynthesis; ubiquinone biosynthesis. In terms of biological role, catalyzes the decarboxylation of 3-octaprenyl-4-hydroxy benzoate to 2-octaprenylphenol, an intermediate step in ubiquinone biosynthesis. This is 3-octaprenyl-4-hydroxybenzoate carboxy-lyase from Pseudomonas paraeruginosa (strain DSM 24068 / PA7) (Pseudomonas aeruginosa (strain PA7)).